The sequence spans 152 residues: UPF0260 protein BR1477/BS1330_I1471 (152 aa).

The protein belongs to the UPF0260 family.

The chain is UPF0260 protein BR1477/BS1330_I1471 from Brucella suis biovar 1 (strain 1330).